A 447-amino-acid chain; its full sequence is Na(+)-translocating NADH-quinone reductase subunit A (447 aa).

It belongs to the NqrA family. In terms of assembly, composed of six subunits; NqrA, NqrB, NqrC, NqrD, NqrE and NqrF.

It carries out the reaction a ubiquinone + n Na(+)(in) + NADH + H(+) = a ubiquinol + n Na(+)(out) + NAD(+). Its function is as follows. NQR complex catalyzes the reduction of ubiquinone-1 to ubiquinol by two successive reactions, coupled with the transport of Na(+) ions from the cytoplasm to the periplasm. NqrA to NqrE are probably involved in the second step, the conversion of ubisemiquinone to ubiquinol. This chain is Na(+)-translocating NADH-quinone reductase subunit A, found in Neisseria meningitidis serogroup A / serotype 4A (strain DSM 15465 / Z2491).